A 229-amino-acid chain; its full sequence is Uridylate cyclase (229 aa).

The region spanning 47 to 178 (TVLYADLDGS…RAANYAAKLT (132 aa)) is the Guanylate cyclase domain. Y50 contributes to the a ribonucleoside 5'-triphosphate binding site. 2 residues coordinate Mn(2+): D52 and D96. Residue R97 coordinates a ribonucleoside 5'-triphosphate.

The protein belongs to the adenylyl cyclase class-4/guanylyl cyclase family. Pyrimidine cyclase subfamily. In terms of assembly, homodimer. Requires Mn(2+) as cofactor.

It is found in the cytoplasm. The catalysed reaction is UTP = 3',5'-cyclic UMP + diphosphate. Pycsar (pyrimidine cyclase system for antiphage resistance) provides immunity against bacteriophage. The pyrimidine cyclase (PycC) synthesizes cyclic nucleotides in response to infection; these serve as specific second messenger signals. The signals activate the adjacent effector, leading to bacterial cell death and abortive phage infection. A clade B Pycsar system. Its function is as follows. The pyrimidine cyclase gene of a two-gene Pycsar system, generates cyclic UMP (cUMP) from UTP, has little to no activity on ATP, CTP or GTP. Expression of this and adjacent effector BcPycTIR (AC A0A0J5WTU0) probably confers resistance to bacteriophage. The genes are probably only expressed in response to bacteriophage infection. This chain is Uridylate cyclase, found in Burkholderia cepacia (Pseudomonas cepacia).